The sequence spans 362 residues: Salactin (362 aa).

The span at 1–10 shows a compositional bias: acidic residues; the sequence is MSDDTEDDSG. The segment at 1–28 is disordered; sequence MSDDTEDDSGGESTADMEFGEQPAPLGV.

In terms of assembly, forms dynamically unstable filaments. Monomers are added at the growing filament end. In vitro, salactin polymerizes in the presence of ATP and AMP-PNP but not in the presence of ADP, GTP, ATPgammaS or buffer alone.

The protein resides in the cytoplasm. Functionally, actin homolog which might be involved in partitioning DNA between daughter cells when chromosomal copy number is low. The protein is Salactin of Halobacterium salinarum (strain ATCC 700922 / JCM 11081 / NRC-1) (Halobacterium halobium).